The sequence spans 547 residues: Nitrate transporter 2.1 (547 aa).

The next 12 membrane-spanning stretches (helical) occupy residues 53–73 (WICF…APII), 86–106 (NAGV…GIVV), 113–133 (YGAA…ALVT), 143–163 (FFIG…GTMF), 173–193 (AIAA…MPLI), 211–231 (AFFV…LLGI), 262–280 (LGNY…SFGV), 296–316 (FGLN…MNLF), 338–358 (IWAL…LGKV), 366–386 (IVIM…HFGI), 400–420 (GLVG…WFAG), and 433–453 (GFVY…FIWF).

It belongs to the major facilitator superfamily. Nitrate/nitrite porter (TC 2.A.1.8) family.

Its subcellular location is the cell membrane. With respect to regulation, nitrite transport mediated by system 1 is very sensitive to inhibition by nitrate. Its function is as follows. Involved in nitrate transport, but does not seem to be able to mediate transport by its own. Acts as a dual component transporter with NAR2 (system 1). Imports nitrate with high affinity when expressed with NAR2 in a heterologous system (Xenopus oocytes). Involved in a high affinity and a high capacity transport specific for both nitrate and nitrite. The sequence is that of Nitrate transporter 2.1 from Chlamydomonas reinhardtii (Chlamydomonas smithii).